The following is a 240-amino-acid chain: RNA-binding protein pno1 (240 aa).

Residues 1 to 15 (MEAENIRADAFEPAK) show a composition bias toward basic and acidic residues. The tract at residues 1-61 (MEAENIRADA…APPKAKRARS (61 aa)) is disordered. Residues 164 to 213 (QSRAIGRLAGKGGRTKFTIENVTKTRIVLADSKIHILGSYQNIQLARRAV) enclose the KH domain.

The protein belongs to the PNO1 family.

Its subcellular location is the nucleus. The protein localises to the nucleolus. The polypeptide is RNA-binding protein pno1 (l(1)G0004) (Drosophila melanogaster (Fruit fly)).